A 554-amino-acid polypeptide reads, in one-letter code: Developmental and secondary metabolism regulator ve-1 (554 aa).

A Velvet domain is found at 31 to 230; that stretch reads GRKLWYSLRV…AEQGCRVRIR (200 aa). The short motif at 45 to 50 is the Nuclear localization signal element; that stretch reads LRARAC. Basic and acidic residues predominate over residues 166-175; it reads TKEDKDKDPE. 3 disordered regions span residues 166 to 190, 232 to 430, and 465 to 528; these read TKED…SFDF, DVRM…PHRL, and PRAY…VDDK. A compositionally biased stretch (polar residues) spans 276-292; the sequence is RSMSGSTERTPYSSISD. 2 stretches are compositionally biased toward pro residues: residues 363–372 and 485–494; these read SYPPPPPPHQ and LPPPPPPPPQ. The tract at residues 455 to 487 is PEST; that stretch reads SPSNMAAPPYPRAYSVSNSGGLTSAGGYNQLPP. The segment covering 500–528 has biased composition (basic and acidic residues); sequence RAHDQTFRADPEMRRYQDGARERESVDDK.

Belongs to the velvet family. VeA subfamily. As to quaternary structure, component of the heterotrimeric velvet complex composed of lae-1, ve-1 and vel-2; Ve-1 acting as a bridging protein between lae-1 and vel-2.

It is found in the nucleus. Its subcellular location is the cytoplasm. Functionally, component of the velvet transcription factor complex that controls sexual/asexual developmental ratio in response to light, promoting sexual development in the darkness while stimulating asexual sporulation under illumination. The velvet complex hat acts as a global regulator for secondary metabolite gene expression. In Neurospora crassa (strain ATCC 24698 / 74-OR23-1A / CBS 708.71 / DSM 1257 / FGSC 987), this protein is Developmental and secondary metabolism regulator ve-1.